The sequence spans 239 residues: 1-(5-phosphoribosyl)-5-[(5-phosphoribosylamino)methylideneamino] imidazole-4-carboxamide isomerase (239 aa).

D8 acts as the Proton acceptor in catalysis. D129 (proton donor) is an active-site residue.

It belongs to the HisA/HisF family.

Its subcellular location is the cytoplasm. The catalysed reaction is 1-(5-phospho-beta-D-ribosyl)-5-[(5-phospho-beta-D-ribosylamino)methylideneamino]imidazole-4-carboxamide = 5-[(5-phospho-1-deoxy-D-ribulos-1-ylimino)methylamino]-1-(5-phospho-beta-D-ribosyl)imidazole-4-carboxamide. Its pathway is amino-acid biosynthesis; L-histidine biosynthesis; L-histidine from 5-phospho-alpha-D-ribose 1-diphosphate: step 4/9. The polypeptide is 1-(5-phosphoribosyl)-5-[(5-phosphoribosylamino)methylideneamino] imidazole-4-carboxamide isomerase (Legionella pneumophila (strain Paris)).